An 80-amino-acid chain; its full sequence is Protein CEBPZOS (80 aa).

The helical transmembrane segment at 15–31 threads the bilayer; sequence GVLAAELVGVAGAYCLF.

It is found in the mitochondrion membrane. This Mus musculus (Mouse) protein is Protein CEBPZOS.